Reading from the N-terminus, the 162-residue chain is Transcription elongation factor GreA (162 aa).

The stretch at 1–28 forms a coiled coil; sequence MQKEPMLEETYRKLSEELEQLKSVERGV.

The protein belongs to the GreA/GreB family.

Functionally, necessary for efficient RNA polymerase transcription elongation past template-encoded arresting sites. The arresting sites in DNA have the property of trapping a certain fraction of elongating RNA polymerases that pass through, resulting in locked ternary complexes. Cleavage of the nascent transcript by cleavage factors such as GreA or GreB allows the resumption of elongation from the new 3'terminus. GreA releases sequences of 2 to 3 nucleotides. The chain is Transcription elongation factor GreA from Sulfurovum sp. (strain NBC37-1).